The sequence spans 361 residues: MPGPQGAGGAPAMNLGKLSPVGWVSSSQGKKRLTADMISPPLGDFRHTMHVGRGGDVFGDTSFLSNHGGGSGSTHRSPRGFLAKKLQLVRRVGAPPRRMASPPAPSPAPPAISPIIKNAISLPQLNQAAYDSLVVGKLSFDRSPASSTDGHSAYGLDSGFCTISRLPRPEKPRDRDRDSSFPAEPELRRSDSLLSFRLDLDLGPSLLTELLGAMSLSEGSAAETPAPAPAASPPASVANPPAPASSPSLRGRCPNGVTTRLGPVAEARASVVGEGPRAPADEGPGKHRGAVSGGSQSRHHYTEVDARAEGLGALSQARASWGSLDEEWGASQAGSRTPVPSTVQANTFEFADAEEDDEVKV.

The disordered stretch occupies residues 1 to 29 (MPGPQGAGGAPAMNLGKLSPVGWVSSSQG). Ser19 and Ser27 each carry phosphoserine. Thr34 is modified (phosphothreonine). In terms of domain architecture, CRIB spans 38–52 (ISPPLGDFRHTMHVG). At Ser39 the chain carries Phosphoserine. At Arg53 the chain carries Omega-N-methylarginine. Ser65, Ser73, Ser77, Ser101, Ser113, Ser121, Ser139, Ser180, Ser190, Ser192, and Ser195 each carry phosphoserine. The disordered stretch occupies residues 161-186 (CTISRLPRPEKPRDRDRDSSFPAEPE). Basic and acidic residues predominate over residues 167–186 (PRPEKPRDRDRDSSFPAEPE). 2 disordered regions span residues 218 to 300 (EGSA…SRHH) and 320 to 361 (SWGS…EVKV). Repeat copies occupy residues 220-226 (SAAETPA), 229-235 (PAASPPA), 236-242 (SVANPPA), and 243-249 (PASSPSL). The segment at 220–249 (SAAETPAPAPAASPPASVANPPAPASSPSL) is 4 X 7 AA tandem repeats of [PT]-[AT]-A-[ENT]-[PT]-[PTS]-[AG]. Phosphoserine occurs at positions 270, 320, and 323. The span at 332-347 (QAGSRTPVPSTVQANT) shows a compositional bias: polar residues. A compositionally biased stretch (acidic residues) spans 351–361 (ADAEEDDEVKV).

This sequence belongs to the BORG/CEP family. As to quaternary structure, interacts with RHOQ and CDC42, in a GTP-dependent manner.

The protein localises to the endomembrane system. Its subcellular location is the cytoplasm. It localises to the cytoskeleton. Probably involved in the organization of the actin cytoskeleton. Induced membrane extensions in fibroblasts. The sequence is that of Cdc42 effector protein 1 from Bos taurus (Bovine).